Here is a 156-residue protein sequence, read N- to C-terminus: Nuclear cap-binding protein subunit 2 (156 aa).

The residue at position 2 (serine 2) is an N-acetylserine. 2 positions are modified to phosphoserine: serine 13 and serine 18. MRNA-binding positions include tyrosine 20, tyrosine 43, 112–116 (RTDWD), 123–127 (RQYGR), and 133–134 (QV). Residues 40 to 118 (CTLYVGNLSF…RIIRTDWDAG (79 aa)) form the RRM domain. A disordered region spans residues 124–156 (QYGRGRSGGQVRDEYRQDYDAGRGGYGKLAQNQ). Residues 134–144 (VRDEYRQDYDA) show a composition bias toward basic and acidic residues. An Omega-N-methylarginine modification is found at arginine 146.

This sequence belongs to the RRM NCBP2 family. As to quaternary structure, component of the nuclear cap-binding complex (CBC), a heterodimer composed of NCBP1/CBP80 and NCBP2/CBP20 that interacts with m7GpppG-capped RNA. Found in a U snRNA export complex with PHAX/RNUXA, NCBP1/CBP80, NCBP2/CBP20, RAN, XPO1 and m7G-capped RNA. Interacts with PHAX/RNUXA, EIF4G1, HNRNPF, HNRNPH1 and ALYREF/THOC4/ALY. Interacts with SRRT/ARS2 and KPNA3.

The protein localises to the nucleus. The protein resides in the cytoplasm. Its function is as follows. Component of the cap-binding complex (CBC), which binds co-transcriptionally to the 5' cap of pre-mRNAs and is involved in various processes such as pre-mRNA splicing, translation regulation, nonsense-mediated mRNA decay, RNA-mediated gene silencing (RNAi) by microRNAs (miRNAs) and mRNA export. The CBC complex is involved in mRNA export from the nucleus via its interaction with ALYREF/THOC4/ALY, leading to the recruitment of the mRNA export machinery to the 5' end of mRNA and to mRNA export in a 5' to 3' direction through the nuclear pore. The CBC complex is also involved in mediating U snRNA and intronless mRNAs export from the nucleus. The CBC complex is essential for a pioneer round of mRNA translation, before steady state translation when the CBC complex is replaced by cytoplasmic cap-binding protein eIF4E. The pioneer round of mRNA translation mediated by the CBC complex plays a central role in nonsense-mediated mRNA decay (NMD), NMD only taking place in mRNAs bound to the CBC complex, but not on eIF4E-bound mRNAs. The CBC complex enhances NMD in mRNAs containing at least one exon-junction complex (EJC) via its interaction with UPF1, promoting the interaction between UPF1 and UPF2. The CBC complex is also involved in 'failsafe' NMD, which is independent of the EJC complex, while it does not participate in Staufen-mediated mRNA decay (SMD). During cell proliferation, the CBC complex is also involved in microRNAs (miRNAs) biogenesis via its interaction with SRRT/ARS2, thereby being required for miRNA-mediated RNA interference. The CBC complex also acts as a negative regulator of PARN, thereby acting as an inhibitor of mRNA deadenylation. In the CBC complex, NCBP2/CBP20 recognizes and binds capped RNAs (m7GpppG-capped RNA) but requires NCBP1/CBP80 to stabilize the movement of its N-terminal loop and lock the CBC into a high affinity cap-binding state with the cap structure. The conventional cap-binding complex with NCBP2 binds both small nuclear RNA (snRNA) and messenger (mRNA) and is involved in their export from the nucleus. The chain is Nuclear cap-binding protein subunit 2 (NCBP2) from Bos taurus (Bovine).